The chain runs to 358 residues: MEREKEQFRKLFIGGLSFETTEESLRNFYEQWGQLTDCVVMRDPASKRSRGFGFVTFSCMNEVDAAMSARPHTIDGRVVEPKRAVAREESAKPGAHVTVKKLFVGGIKEDTEEHHLREYFEEYGKIESTEIITDKQSGKKRGFGFVTFNDHDPVDKIVLQKYHTINGHNAEVRKALSKQEMQDVQNTRNNRGGNFGFGDSRGGGNFGSGPGGNFRGGSDGYGGGRGYGDGYNGYGGGQGGTYLDEKQNLYSSGNFGGGPSYGAGGGRGGYGGGPSYGNQGGGYGGGYDNYGGGNYGGGGNYNDFGNYNQQSSSYGPMKSGGNFGGNRSMGGPYGGGNYGPGNGSGASGGGGYGGRNRY.

RRM domains lie at 9–92 and 100–179; these read RKLF…ESAK and KKLF…LSKQ. Disordered stretches follow at residues 182 to 217 and 333 to 358; these read QDVQNTRNNRGGNFGFGDSRGGGNFGSGPGGNFRGG and YGGGNYGPGNGSGASGGGGYGGRNRY. The span at 193 to 217 shows a compositional bias: gly residues; sequence GNFGFGDSRGGGNFGSGPGGNFRGG. Positions 309–352 are nuclear targeting sequence; it reads QQSSSYGPMKSGGNFGGNRSMGGPYGGGNYGPGNGSGASGGGGY.

The protein localises to the nucleus. Functionally, forms complexes (ribonucleosomes) with at least 20 other different hnRNP and heterogeneous nuclear RNA in the nucleus. This Xenopus laevis (African clawed frog) protein is Heterogeneous nuclear ribonucleoprotein A2 homolog 2.